Consider the following 264-residue polypeptide: 3-methyl-2-oxobutanoate hydroxymethyltransferase (264 aa).

Residues Asp45 and Asp84 each coordinate Mg(2+). 3-methyl-2-oxobutanoate is bound by residues 45-46, Asp84, and Lys112; that span reads DS. A Mg(2+)-binding site is contributed by Glu114. Glu181 functions as the Proton acceptor in the catalytic mechanism.

This sequence belongs to the PanB family. In terms of assembly, homodecamer; pentamer of dimers. Mg(2+) is required as a cofactor.

The protein resides in the cytoplasm. The catalysed reaction is 3-methyl-2-oxobutanoate + (6R)-5,10-methylene-5,6,7,8-tetrahydrofolate + H2O = 2-dehydropantoate + (6S)-5,6,7,8-tetrahydrofolate. It participates in cofactor biosynthesis; (R)-pantothenate biosynthesis; (R)-pantoate from 3-methyl-2-oxobutanoate: step 1/2. Functionally, catalyzes the reversible reaction in which hydroxymethyl group from 5,10-methylenetetrahydrofolate is transferred onto alpha-ketoisovalerate to form ketopantoate. This chain is 3-methyl-2-oxobutanoate hydroxymethyltransferase, found in Escherichia coli O81 (strain ED1a).